Reading from the N-terminus, the 345-residue chain is Uroporphyrinogen decarboxylase (345 aa).

Substrate-binding positions include 30–34, aspartate 79, tyrosine 154, serine 209, and histidine 322; that span reads RQAGR.

It belongs to the uroporphyrinogen decarboxylase family. Homodimer.

It is found in the cytoplasm. The enzyme catalyses uroporphyrinogen III + 4 H(+) = coproporphyrinogen III + 4 CO2. It functions in the pathway porphyrin-containing compound metabolism; protoporphyrin-IX biosynthesis; coproporphyrinogen-III from 5-aminolevulinate: step 4/4. Its function is as follows. Catalyzes the decarboxylation of four acetate groups of uroporphyrinogen-III to yield coproporphyrinogen-III. The chain is Uroporphyrinogen decarboxylase from Nocardioides sp. (strain ATCC BAA-499 / JS614).